Here is a 213-residue protein sequence, read N- to C-terminus: Cysteine dioxygenase (213 aa).

Fe cation contacts are provided by histidine 100, histidine 102, and histidine 160. The segment at residues 107-177 (CVMKVLKGSL…TNFAISLHLY (71 aa)) is a cross-link (3'-(S-cysteinyl)-tyrosine (Cys-Tyr)).

It belongs to the cysteine dioxygenase family. It depends on Fe cation as a cofactor. Post-translationally, the thioether cross-link between Cys-107 and Tyr-177 plays a structural role through stabilizing the Fe(2+) ion, and prevents the production of highly damaging free hydroxyl radicals by holding the oxygen radical via hydroxyl hydrogen.

It catalyses the reaction L-cysteine + O2 = 3-sulfino-L-alanine + H(+). The protein is Cysteine dioxygenase (CDO1) of Ajellomyces capsulatus (strain G186AR / H82 / ATCC MYA-2454 / RMSCC 2432) (Darling's disease fungus).